Consider the following 316-residue polypeptide: uncharacterized protein (316 aa).

This sequence belongs to the chlamydial CPn_0441/CT_007/TC_0275 family.

This is an uncharacterized protein from Chlamydia trachomatis serovar D (strain ATCC VR-885 / DSM 19411 / UW-3/Cx).